Consider the following 385-residue polypeptide: Homoserine O-succinyltransferase (385 aa).

Residues asparagine 51–leucine 359 form the AB hydrolase-1 domain. The active-site Nucleophile is serine 157. Arginine 227 is a substrate binding site. Active-site residues include aspartate 322 and histidine 355. Aspartate 356 serves as a coordination point for substrate.

Belongs to the AB hydrolase superfamily. MetX family. As to quaternary structure, homodimer.

The protein localises to the cytoplasm. The enzyme catalyses L-homoserine + succinyl-CoA = O-succinyl-L-homoserine + CoA. It functions in the pathway amino-acid biosynthesis; L-methionine biosynthesis via de novo pathway; O-succinyl-L-homoserine from L-homoserine: step 1/1. Transfers a succinyl group from succinyl-CoA to L-homoserine, forming succinyl-L-homoserine. The polypeptide is Homoserine O-succinyltransferase (Marinomonas sp. (strain MWYL1)).